Consider the following 826-residue polypeptide: Villin-1 (826 aa).

A core region spans residues 1-734 (MVELSKKVTG…YDELKAELGD (734 aa)). One copy of the Gelsolin-like 1 repeat lies at 27–76 (MEMVPVPTKSYGNFYEGDCYVLLSTRKTGSGFSYNIHYWLGKNSSQDEQG). 112–119 (KQGLIYKQ) is a binding site for a 1,2-diacyl-sn-glycero-3-phospho-(1D-myo-inositol-4,5-bisphosphate). A crucial for binding an actin filament region spans residues 129-137 (VETNTYNVQ). An a 1,2-diacyl-sn-glycero-3-phospho-(1D-myo-inositol-4,5-bisphosphate)-binding site is contributed by 138 to 146 (RLLHVKGKK). Gelsolin-like repeat units lie at residues 148 to 188 (VVAA…AERL), 265 to 309 (LVIQ…EEKQ), 408 to 457 (QELV…DELA), 528 to 568 (TKAF…DERE), and 631 to 672 (FLAT…SEKE). Residues 735 to 826 (NASIGQLVSG…QNLKKEKGLF (92 aa)) are headpiece. Residues 760-826 (PTKLETFPLD…QNLKKEKGLF (67 aa)) form the HP domain. The absolutely required for activity stretch occupies residues 820–823 (KKEK).

The protein belongs to the villin/gelsolin family. As to quaternary structure, monomer. Homodimer. Associates with F-actin; the association with F-actin is inhibited by tropomyosin. Phosphorylated on tyrosine residues. The unphosphorylated form increases the initial rate of actin-nucleating activity, whereas the tyrosine-phosphorylated form inhibits actin-nucleating activity, enhances actin-bundling activity and enhances actin-severing activity by reducing high Ca(2+) requirements. The tyrosine-phosphorylated form does not regulate actin-capping activity. Tyrosine phosphorylation is essential for cell migration: tyrosine phosphorylation sites in the N-terminus half regulate actin reorganization and cell morphology, whereas tyrosine phosphorylation sites in the C-terminus half regulate cell migration. Tyrosine phosphorylation is induced by epidermal growth factor (EGF) and stimulates cell migration. Specifically expressed in epithelial cells. Component of brush border microvilli.

The protein localises to the cytoplasm. It localises to the cytoskeleton. The protein resides in the cell projection. Its subcellular location is the microvillus. It is found in the lamellipodium. The protein localises to the ruffle. It localises to the filopodium tip. The protein resides in the filopodium. Its function is as follows. Epithelial cell-specific Ca(2+)-regulated actin-modifying protein that modulates the reorganization of microvillar actin filaments. Plays a role in the actin nucleation, actin filament bundle assembly, actin filament capping and severing. Binds phosphatidylinositol 4,5-bisphosphate (PIP2) and lysophosphatidic acid (LPA); binds LPA with higher affinity than PIP2. Binding to LPA increases its phosphorylation by SRC and inhibits all actin-modifying activities. Binding to PIP2 inhibits actin-capping and -severing activities but enhances actin-bundling activity. Regulates the intestinal epithelial cell morphology, cell invasion, cell migration and apoptosis. Protects against apoptosis induced by dextran sodium sulfate (DSS) in the gastrointestinal epithelium. Appears to regulate cell death by maintaining mitochondrial integrity. Enhances hepatocyte growth factor (HGF)-induced epithelial cell motility, chemotaxis and wound repair. Its actin-bundling activity is inhibited by tropomyosin. This chain is Villin-1 (VIL1), found in Gallus gallus (Chicken).